Consider the following 256-residue polypeptide: 4-hydroxy-tetrahydrodipicolinate reductase (256 aa).

8–13 (GASGKM) serves as a coordination point for NAD(+). Lysine 36 contacts NADP(+). NAD(+) is bound by residues 87–89 (GTT) and 111–114 (ATNM). The active-site Proton donor/acceptor is histidine 143. Histidine 144 contacts (S)-2,3,4,5-tetrahydrodipicolinate. Catalysis depends on lysine 147, which acts as the Proton donor. 153 to 154 (GT) is a (S)-2,3,4,5-tetrahydrodipicolinate binding site.

This sequence belongs to the DapB family.

The protein localises to the cytoplasm. It carries out the reaction (S)-2,3,4,5-tetrahydrodipicolinate + NAD(+) + H2O = (2S,4S)-4-hydroxy-2,3,4,5-tetrahydrodipicolinate + NADH + H(+). The catalysed reaction is (S)-2,3,4,5-tetrahydrodipicolinate + NADP(+) + H2O = (2S,4S)-4-hydroxy-2,3,4,5-tetrahydrodipicolinate + NADPH + H(+). Its pathway is amino-acid biosynthesis; L-lysine biosynthesis via DAP pathway; (S)-tetrahydrodipicolinate from L-aspartate: step 4/4. Functionally, catalyzes the conversion of 4-hydroxy-tetrahydrodipicolinate (HTPA) to tetrahydrodipicolinate. The protein is 4-hydroxy-tetrahydrodipicolinate reductase of Campylobacter concisus (strain 13826).